We begin with the raw amino-acid sequence, 890 residues long: Wolframin (890 aa).

At methionine 1 the chain carries N-acetylmethionine. Residues 1–86 (MDSNTAPLGP…TGPTKGDMEI (86 aa)) are disordered. Residues 1–321 (MDSNTAPLGP…MHWLSTIIPT (321 aa)) are interaction with ATP6V1A. Positions 10–20 (PSCPQPPPAPQ) are enriched in pro residues. Threonine 30 bears the Phosphothreonine; by FAM20C mark. Serine 32 carries the phosphoserine; by FAM20C modification. Position 157 is a phosphoserine (serine 157). The next 10 helical transmembrane spans lie at 314-334 (WLST…FIVS), 340-360 (FFAF…MVIC), 402-422 (LEPY…FPIA), 427-447 (IPCS…YLSL), 465-485 (AGLL…KVLG), 496-516 (LVVL…YLFF), 529-549 (CYLV…VILL), 563-583 (YFLF…VGVL), 589-609 (FTSL…VPLL), and 632-652 (MVKL…FYVY). The Lumenal segment spans residues 653–869 (RSEGMKVYNS…HVKIEHDWRS (217 aa)). 2 N-linked (GlcNAc...) asparagine glycosylation sites follow: asparagine 661 and asparagine 746. A helical membrane pass occupies residues 870 to 890 (TVHGAVKFAFDFFFFPFLSAA).

As to quaternary structure, interacts with ATP6V1A. In terms of tissue distribution, highly expressed in heart followed by brain, placenta, lung and pancreas. Weakly expressed in liver, kidney and skeletal muscle. Also expressed in islet and beta-cell insulinoma cell line.

It localises to the endoplasmic reticulum membrane. It is found in the cytoplasmic vesicle. The protein localises to the secretory vesicle. In terms of biological role, participates in the regulation of cellular Ca(2+) homeostasis, at least partly, by modulating the filling state of the endoplasmic reticulum Ca(2+) store. Negatively regulates the ER stress response and positively regulates the stability of V-ATPase subunits ATP6V1A and ATP1B1 by preventing their degradation through an unknown proteasome-independent mechanism. In Homo sapiens (Human), this protein is Wolframin (WFS1).